The chain runs to 513 residues: Histidine ammonia-lyase (513 aa).

The 5-imidazolinone (Ala-Gly) cross-link spans 144–146; sequence ASG. Ser-145 carries the post-translational modification 2,3-didehydroalanine (Ser).

Belongs to the PAL/histidase family. In terms of processing, contains an active site 4-methylidene-imidazol-5-one (MIO), which is formed autocatalytically by cyclization and dehydration of residues Ala-Ser-Gly.

It localises to the cytoplasm. The enzyme catalyses L-histidine = trans-urocanate + NH4(+). Its pathway is amino-acid degradation; L-histidine degradation into L-glutamate; N-formimidoyl-L-glutamate from L-histidine: step 1/3. The polypeptide is Histidine ammonia-lyase (Streptococcus pyogenes serotype M49 (strain NZ131)).